Reading from the N-terminus, the 83-residue chain is MNYFILILVAALLILDVNCKKDGYPVEHSGCKYTCWKNEYCDKVCKDLKGEGGYCYINLTCWCTGLPDNVPLKTNQRCNGKRK.

A signal peptide spans 1-19; it reads MNYFILILVAALLILDVNC. The LCN-type CS-alpha/beta domain occupies 21–79; the sequence is KDGYPVEHSGCKYTCWKNEYCDKVCKDLKGEGGYCYINLTCWCTGLPDNVPLKTNQRCN. 4 disulfide bridges follow: C31–C78, C35–C55, C41–C61, and C45–C63.

This sequence belongs to the long (4 C-C) scorpion toxin superfamily. Sodium channel inhibitor family. As to expression, expressed by the venom gland.

The protein localises to the secreted. Functionally, this toxin significantly slows the fast inactivation of Nav1.2/SCN2A (EC(50)=580 nM), Nav1.3/SCN3A (EC(50)=1310 nM), Nav1.4/SCN4A (EC(50)=530 nM), and Nav1.7/SCN9A (EC(50)=1340 nM). The toxin does not affect the peak amplitude of Nav1.7 currents. On all channels cited above, the toxin requires depolarizing potentials to slow channel inactivation. In addition, the toxin has no or very weak effects on the voltage-dependence of steady-state inactivation, and on voltage-dependence of activation. In vivo, it produces paw licking in mice equivalent to the effects of whole venom. This chain is Alpha-toxin CvIV4, found in Centruroides vittatus (Striped bark scorpion).